Consider the following 355-residue polypeptide: Fructose-1,6-bisphosphatase class 1 (355 aa).

Mg(2+)-binding residues include Glu94, Asp116, Leu118, and Asp119. Residues 119–122, Asn211, and 263–265 each bind substrate; these read DGSS and YLY. Glu283 contacts Mg(2+).

This sequence belongs to the FBPase class 1 family. In terms of assembly, homotetramer. The cofactor is Mg(2+).

Its subcellular location is the cytoplasm. It catalyses the reaction beta-D-fructose 1,6-bisphosphate + H2O = beta-D-fructose 6-phosphate + phosphate. Its pathway is carbohydrate biosynthesis; Calvin cycle. The chain is Fructose-1,6-bisphosphatase class 1 from Rhodospirillum rubrum (strain ATCC 11170 / ATH 1.1.1 / DSM 467 / LMG 4362 / NCIMB 8255 / S1).